Consider the following 453-residue polypeptide: Vitamin D3 receptor A (453 aa).

The segment at residues 53–128 (PRICGVCGDK…IGMMKEFILT (76 aa)) is a DNA-binding region (nuclear receptor). Residues Cys56, Cys59, Cys73, Cys76, Cys92, Cys98, Cys108, and Cys111 each contribute to the Zn(2+) site. 2 NR C4-type zinc fingers span residues 56–76 (CGVC…CEGC) and 92–111 (CPFN…CQAC). The segment at 129–158 (DEEVQRKKDLIMKRKEEEAAREARKPRLSD) is hinge. Positions 159 to 449 (EQMQIINSLV…LTPLVLEVFG (291 aa)) constitute an NR LBD domain. Calcitriol is bound by residues Tyr175 and Ser265. The interaction with coactivator LXXLL motif stretch occupies residues 274–292 (KMIPGFRDLTAEDQIALLK). Calcitriol-binding residues include Arg302, Ser306, His333, and His423. The 9aaTAD signature appears at 442–450 (PLVLEVFGS).

It belongs to the nuclear hormone receptor family. NR1 subfamily. Homodimer in the absence of bound vitamin D3. Heterodimer with RXRA after vitamin D3 binding. Interacts with ncoa1 and possibly other coactivators, leading to a strong increase of transcription of target genes. As to expression, detected in embryo 24 to 48 hours after fertilization and in gastrula.

It localises to the nucleus. The protein localises to the cytoplasm. Nuclear receptor for calcitriol, the active form of vitamin D3 which mediates the action of this vitamin on cells. Enters the nucleus upon vitamin D3 binding where it forms heterodimers with the retinoid X receptor/RXR. The VDR-RXR heterodimers bind to specific response elements on DNA and activate the transcription of vitamin D3-responsive target genes. Recruited to promoters via its interaction with BAZ1B/WSTF which mediates the interaction with acetylated histones, an essential step for VDR-promoter association. Plays a central role in calcium homeostasis. This chain is Vitamin D3 receptor A (vdra), found in Danio rerio (Zebrafish).